A 170-amino-acid polypeptide reads, in one-letter code: Peptide methionine sulfoxide reductase MsrA (170 aa).

Cysteine 13 is an active-site residue.

Belongs to the MsrA Met sulfoxide reductase family.

It catalyses the reaction L-methionyl-[protein] + [thioredoxin]-disulfide + H2O = L-methionyl-(S)-S-oxide-[protein] + [thioredoxin]-dithiol. The enzyme catalyses [thioredoxin]-disulfide + L-methionine + H2O = L-methionine (S)-S-oxide + [thioredoxin]-dithiol. Has an important function as a repair enzyme for proteins that have been inactivated by oxidation. Catalyzes the reversible oxidation-reduction of methionine sulfoxide in proteins to methionine. The polypeptide is Peptide methionine sulfoxide reductase MsrA (Nocardia farcinica (strain IFM 10152)).